Consider the following 134-residue polypeptide: 6,7-dimethyl-8-ribityllumazine synthase (134 aa).

Residues phenylalanine 12, 44 to 46 (VFD), and 68 to 70 (SVI) each bind 5-amino-6-(D-ribitylamino)uracil. 73–74 (ET) contacts (2S)-2-hydroxy-3-oxobutyl phosphate. Histidine 76 functions as the Proton donor in the catalytic mechanism. Leucine 101 is a binding site for 5-amino-6-(D-ribitylamino)uracil. Arginine 116 is a (2S)-2-hydroxy-3-oxobutyl phosphate binding site.

Belongs to the DMRL synthase family.

It carries out the reaction (2S)-2-hydroxy-3-oxobutyl phosphate + 5-amino-6-(D-ribitylamino)uracil = 6,7-dimethyl-8-(1-D-ribityl)lumazine + phosphate + 2 H2O + H(+). It functions in the pathway cofactor biosynthesis; riboflavin biosynthesis; riboflavin from 2-hydroxy-3-oxobutyl phosphate and 5-amino-6-(D-ribitylamino)uracil: step 1/2. In terms of biological role, catalyzes the formation of 6,7-dimethyl-8-ribityllumazine by condensation of 5-amino-6-(D-ribitylamino)uracil with 3,4-dihydroxy-2-butanone 4-phosphate. This is the penultimate step in the biosynthesis of riboflavin. The sequence is that of 6,7-dimethyl-8-ribityllumazine synthase from Methanosarcina mazei (strain ATCC BAA-159 / DSM 3647 / Goe1 / Go1 / JCM 11833 / OCM 88) (Methanosarcina frisia).